The primary structure comprises 295 residues: Ribosomal protein L11 methyltransferase (295 aa).

S-adenosyl-L-methionine contacts are provided by Thr139, Gly166, Asp188, and Asn231.

This sequence belongs to the methyltransferase superfamily. PrmA family.

It localises to the cytoplasm. The enzyme catalyses L-lysyl-[protein] + 3 S-adenosyl-L-methionine = N(6),N(6),N(6)-trimethyl-L-lysyl-[protein] + 3 S-adenosyl-L-homocysteine + 3 H(+). Methylates ribosomal protein L11. In Cyanothece sp. (strain PCC 7425 / ATCC 29141), this protein is Ribosomal protein L11 methyltransferase.